The sequence spans 97 residues: Co-chaperonin GroES (97 aa).

This sequence belongs to the GroES chaperonin family. Heptamer of 7 subunits arranged in a ring. Interacts with the chaperonin GroEL.

It is found in the cytoplasm. Functionally, together with the chaperonin GroEL, plays an essential role in assisting protein folding. The GroEL-GroES system forms a nano-cage that allows encapsulation of the non-native substrate proteins and provides a physical environment optimized to promote and accelerate protein folding. GroES binds to the apical surface of the GroEL ring, thereby capping the opening of the GroEL channel. The sequence is that of Co-chaperonin GroES from Buchnera aphidicola subsp. Cinara cedri (strain Cc).